Reading from the N-terminus, the 214-residue chain is ER lumen protein-retaining receptor (214 aa).

Residues 1-4 (MVFN) lie on the Lumenal side of the membrane. The chain crosses the membrane as a helical span at residues 5-23 (LFRISADLVHLLSIYFLLT). Topologically, residues 24-37 (KIISHKNCIGISLR) are cytoplasmic. The helical transmembrane segment at 38–55 (SQILFFIVWVTRYLDIFY) threads the bilayer. Residues 56–63 (NFYSLYNT) are Lumenal-facing. A helical transmembrane segment spans residues 64 to 82 (ILKIVYLTTSAYTIYLISK). The Cytoplasmic segment spans residues 83-98 (RFRATYDKIHDTLNVW). Residues 99 to 112 (YLIVPCIVLAFIFT) traverse the membrane as a helical segment. The Lumenal portion of the chain corresponds to 113–119 (EDYSITE). Residues 120–139 (ICWTFSIFLEAVAILPQILL) traverse the membrane as a helical segment. At 140-151 (LRSTGEVENLNS) the chain is on the cytoplasmic side. Residues 152-170 (QYIFCLGLYRALYIINWIY) traverse the membrane as a helical segment. The Lumenal segment spans residues 171–181 (RYATEQSYWSP). Residues 182–202 (LTWICGSIQTLLYVEYFYYYI) traverse the membrane as a helical segment. At 203 to 214 (KSRVEGTKFVLP) the chain is on the cytoplasmic side.

It belongs to the ERD2 family.

It localises to the endoplasmic reticulum membrane. Its function is as follows. Required for the retention of luminal endoplasmic reticulum proteins. Determines the specificity of the luminal ER protein retention system. Also required for normal vesicular traffic through the Golgi. This is ER lumen protein-retaining receptor from Entamoeba histolytica (strain ATCC 30459 / HM-1:IMSS / ABRM).